The following is a 147-amino-acid chain: Hemoglobin subunit beta (147 aa).

The Globin domain occupies 3-147; it reads EWTDFERATI…VVSSLGRQYH (145 aa). The heme b site is built by His-64 and His-93.

This sequence belongs to the globin family. In terms of assembly, hb 1 is a heterotetramer of two alpha-1 and two beta chains. Hb 2 is a heterotetramer of two alpha-2 and two beta chains. Red blood cells.

Its function is as follows. Involved in oxygen transport from gills to the various peripheral tissues. The chain is Hemoglobin subunit beta (hbb) from Cottoperca gobio (Frogmouth).